The sequence spans 477 residues: PTS system glucose-specific EIICB component (477 aa).

The Cytoplasmic portion of the chain corresponds to 1–14 (MFKNAFANLQKVGK). The PTS EIIC type-1 domain occupies 1 to 388 (MFKNAFANLQ…LDLKTPGRED (388 aa)). The chain crosses the membrane as a helical span at residues 15 to 35 (SLMLPVSVLPIAGILLGVGSA). Residues 36–50 (NFSWLPAVVSHVMAE) lie on the Periplasmic side of the membrane. Residues 51–71 (AGGSVFANMPLIFAIGVALGF) traverse the membrane as a helical segment. The Cytoplasmic segment spans residues 72–79 (TNNDGVSA). A helical membrane pass occupies residues 80 to 100 (LAAVVAYGIMVKTMAVVAPLV). Residues 101–111 (LHLPAEEIASK) are Periplasmic-facing. Residues 112 to 132 (HLADTGVLGGIISGAIAAYMF) traverse the membrane as a helical segment. At 133-151 (NRFYRIKLPEYLGFFAGKR) the chain is on the cytoplasmic side. A helical transmembrane segment spans residues 152–172 (FVPIISGLAAIFTGVVLSFIW). Residues 173 to 190 (PPIGSAIQTFSQWAAYQN) are Periplasmic-facing. The helical transmembrane segment at 191–211 (PVVAFGIYGFIERCLVPFGLH) threads the bilayer. At 212 to 249 (HIWNVPFQMQIGEYTNAAGQVFHGDIPRYMAGDPTAGK) the chain is on the cytoplasmic side. Residues 250–270 (LSGGFLFKMYGLPAAAIAIWH) form a helical membrane-spanning segment. Topologically, residues 271–279 (SAKPENRAK) are periplasmic. The helical transmembrane segment at 280–300 (VGGIMISAALTSFLTGITEPI) threads the bilayer. Over 301–309 (EFSFMFVAP) the chain is Cytoplasmic. Residues 310 to 330 (ILYIIHAILAGLAFPICILLG) form a helical membrane-spanning segment. Over 331-355 (MRDGTSFSHGLIDFIVLSGNSSKLW) the chain is Periplasmic. Residues 356 to 376 (LFPIVGIGYAIVYYTIFRVLI) traverse the membrane as a helical segment. Residues 377 to 477 (KALDLKTPGR…TEMDEYIRNH (101 aa)) lie on the Cytoplasmic side of the membrane. Residues 399-477 (SEMAPALVAA…TEMDEYIRNH (79 aa)) form the PTS EIIB type-1 domain. The Phosphocysteinsyse intermediate; for EIIB activity role is filled by Cys-421. Position 421 is a phosphocysteine (Cys-421).

It is found in the cell inner membrane. The catalysed reaction is N(pros)-phospho-L-histidyl-[protein] + D-glucose(out) = D-glucose 6-phosphate(in) + L-histidyl-[protein]. Functionally, the phosphoenolpyruvate-dependent sugar phosphotransferase system (sugar PTS), a major carbohydrate active transport system, catalyzes the phosphorylation of incoming sugar substrates concomitantly with their translocation across the cell membrane. The enzyme II complex composed of PtsG and Crr is involved in glucose transport. Also functions as a chemoreceptor monitoring the environment for changes in sugar concentration. The polypeptide is PTS system glucose-specific EIICB component (ptsG) (Escherichia coli O6:H1 (strain CFT073 / ATCC 700928 / UPEC)).